We begin with the raw amino-acid sequence, 169 residues long: Der GTPase-activating protein YihI (169 aa).

2 disordered regions span residues 1-99 (MKPS…QAEL) and 146-169 (SYDD…LRGN). Positions 10–19 (SKGHAKARRK) are enriched in basic residues. The segment covering 20–30 (TREELDQEARD) has biased composition (basic and acidic residues). A compositionally biased stretch (basic residues) spans 31–40 (RKRQKKRRGH). A compositionally biased stretch (polar residues) spans 49-58 (GNTTSGSKGQ). A compositionally biased stretch (acidic residues) spans 147–159 (YDDDEEEEEDEKQ). Positions 160–169 (EDMMRLLRGN) are enriched in basic and acidic residues.

This sequence belongs to the YihI family. As to quaternary structure, interacts with Der.

Its function is as follows. A GTPase-activating protein (GAP) that modifies Der/EngA GTPase function. May play a role in ribosome biogenesis. In Escherichia coli O81 (strain ED1a), this protein is Der GTPase-activating protein YihI.